Reading from the N-terminus, the 373-residue chain is Integrator complex subunit 15 (373 aa).

This sequence belongs to the Integrator subunit 15 family. In terms of assembly, belongs to the multiprotein complex Integrator, at least composed of IntS1, IntS2, IntS3, IntS4, omd/IntS5, IntS6, defl/IntS7, IntS8, IntS9, IntS10, IntS11, IntS12, asun/IntS13, IntS14 and IntS15. The core complex associates with protein phosphatase 2A subunits mts/PP2A and Pp2A-29B, to form the Integrator-PP2A (INTAC) complex.

The protein localises to the nucleus. Functionally, component of the integrator complex, a multiprotein complex that terminates RNA polymerase II (Pol II) transcription in the promoter-proximal region of genes. The integrator complex provides a quality checkpoint during transcription elongation by driving premature transcription termination of transcripts that are unfavorably configured for transcriptional elongation: the complex terminates transcription by (1) catalyzing dephosphorylation of the C-terminal domain (CTD) of Pol II subunit Rbp1 and Spt5, and (2) degrading the exiting nascent RNA transcript via endonuclease activity. The integrator complex is also involved in the 3'-end processing of the U7 snRNA, and also the spliceosomal snRNAs U1, U2, U4 and U5. The protein is Integrator complex subunit 15 of Drosophila melanogaster (Fruit fly).